We begin with the raw amino-acid sequence, 1664 residues long: Cortactin-binding protein 2 (1664 aa).

Disordered regions lie at residues 1–23 (MATDGASCEPDLSRAPEDAAGAA), 268–440 (QLKR…ALHP), 455–479 (GNANDPDQNGNTTQSPPSRDVSPTS), and 495–618 (QALS…KPSI). Positions 119 to 276 (RKMQERMSTQ…EQLKRGSDSK (158 aa)) form a coiled coil. Composition is skewed to low complexity over residues 368 to 379 (SSAPTIPAASAS) and 395 to 407 (TSSTPPIPSGTTP). At Arg-499 the chain carries Asymmetric dimethylarginine. 6 ANK repeats span residues 710 to 740 (GRPTLLQQAAAQGNVTLLSMLLNEEGLDTNY), 744 to 773 (DGHSALYSAATNGHADCVRLLLNAEAQVNA), 777 to 806 (NGFTPLCAAAAQGHFECLELLLASDADVNH), 810 to 839 (GGQTPLYLACKNGNTDCIKLLLEAGTDRSI), 843 to 872 (DGWTPVHAAVDTGNVDSLKLLMYYQAPARG), and 913 to 943 (EGWTAAHIAASKGFKNCLEILCRHGGLEPEK). Residues 871-900 (RGNSSNEEEPESGAFARDGGEESSEGTSEP) are disordered. Residues 1447–1483 (SKKKGESGAWRKVSTSPRKKSGRFSSPIWNEPDLSPG) are disordered. Ser-1525 is subject to Phosphoserine. A disordered region spans residues 1558–1664 (RTFHSSGSNP…KHEQVEKPNT (107 aa)). A compositionally biased stretch (polar residues) spans 1587–1600 (PLSSHQATECSTSK). Low complexity predominate over residues 1625–1639 (SQNTKRSSSSSNTRQ). The segment covering 1646–1664 (SKEENWNLHKHEQVEKPNT) has biased composition (basic and acidic residues).

Interacts with CTTN/cortactin SH3 domain. Interacts with STRN, STRN4/zinedin and MOB4/phocein; this interactions mediate the association with the STRIPAK core complex and may regulate dendritic spine distribution of the STRIPAK complex in hippocampal neurons. Activation of glutamate receptors weakens the interaction with STRN and STRN4.

Its subcellular location is the cytoplasm. It localises to the cell cortex. It is found in the cell projection. The protein localises to the dendritic spine. Regulates the dendritic spine distribution of CTTN/cortactin in hippocampal neurons, and thus controls dendritic spinogenesis and dendritic spine maintenance. Associates with the striatin-interacting phosphatase and kinase (STRIPAK) core complex to regulate dendritic spine distribution of the STRIPAK complex in hippocampal neurons. This is Cortactin-binding protein 2 (CTTNBP2) from Oryctolagus cuniculus (Rabbit).